The chain runs to 464 residues: Cystathionine beta-lyase, chloroplastic (464 aa).

A chloroplast-targeting transit peptide spans 1–55 (MTSSLSLHSSFVPSFADLSDRGLISKNSPTSVSISKVPTWEKKQISNRNSFKLNC). Pyridoxal 5'-phosphate-binding residues include Tyr-127, Arg-129, Gly-157, Met-158, Ser-275, and Thr-277. N6-(pyridoxal phosphate)lysine is present on Lys-278.

This sequence belongs to the trans-sulfuration enzymes family. In terms of assembly, forms homodimers. May form homotetramers from two homodimers. The cofactor is pyridoxal 5'-phosphate.

It is found in the plastid. The protein localises to the chloroplast. It catalyses the reaction L,L-cystathionine + H2O = L-homocysteine + pyruvate + NH4(+). The enzyme catalyses an S-substituted L-cysteine + H2O = a thiol + pyruvate + NH4(+). Its pathway is amino-acid biosynthesis; L-methionine biosynthesis via de novo pathway; L-homocysteine from L-cystathionine: step 1/1. In terms of biological role, catalyzes the penultimate step in the de novo biosynthesis of methionine. Its role in methionine metabolism may affect plant development in different organs, probably by modifying plant auxin transport. Its cysteine desulfhydrase activity may be involved in hydrogen sulfur production using L-cysteine as a substrate. The chain is Cystathionine beta-lyase, chloroplastic from Arabidopsis thaliana (Mouse-ear cress).